The sequence spans 415 residues: MNFFQYKHNKLYAEDMPVQQLAEQFGTPLYVYSRATLERHWHAFDSAFGNRPHLICFAVKSCSNIGVLNIMAKLGSGFDIVSQGELERVLAAGGDASKVVFSGVAKSREEIMRALEVRIRCFNVESVSELKHINQIAGEMGKIAPISLRVNPDVDAHTHPYISTGLKENKFGVSVNEAREVYKLASTLPNIKITGMDCHIGSQLTELQPFLDATDRLIVLMEQLKEDGITLKHLDLGGGLGVTYTDETPPHPSDYANALLEKLKNYPELEIILEPGRAISANAGILVAKVQYLKSNESRNFAITDTGMNDMIRPALYEAYMNIVEIDRTLEREKAIYDVVGPVCETSDFLGKQRELSIAEGDYIAQCSAGAYGASMSSNYNSRARTAEVLVDGDQSYLIRRRETLQELWALESTI.

N6-(pyridoxal phosphate)lysine is present on K60. Residues G239 and 274–277 (EPGR) contribute to the pyridoxal 5'-phosphate site. The substrate site is built by R277, R313, and Y317. C344 serves as the catalytic Proton donor. 2 residues coordinate substrate: E345 and Y372. Y372 provides a ligand contact to pyridoxal 5'-phosphate.

Belongs to the Orn/Lys/Arg decarboxylase class-II family. LysA subfamily. As to quaternary structure, homodimer. Pyridoxal 5'-phosphate serves as cofactor.

It catalyses the reaction meso-2,6-diaminopimelate + H(+) = L-lysine + CO2. It participates in amino-acid biosynthesis; L-lysine biosynthesis via DAP pathway; L-lysine from DL-2,6-diaminopimelate: step 1/1. Specifically catalyzes the decarboxylation of meso-diaminopimelate (meso-DAP) to L-lysine. This is Diaminopimelate decarboxylase from Haemophilus influenzae (strain ATCC 51907 / DSM 11121 / KW20 / Rd).